Reading from the N-terminus, the 504-residue chain is Histidine ammonia-lyase (504 aa).

Residues 142 to 144 constitute a cross-link (5-imidazolinone (Ala-Gly)); it reads ASG. 2,3-didehydroalanine (Ser) is present on Ser143.

Belongs to the PAL/histidase family. In terms of processing, contains an active site 4-methylidene-imidazol-5-one (MIO), which is formed autocatalytically by cyclization and dehydration of residues Ala-Ser-Gly.

The protein resides in the cytoplasm. The enzyme catalyses L-histidine = trans-urocanate + NH4(+). The protein operates within amino-acid degradation; L-histidine degradation into L-glutamate; N-formimidoyl-L-glutamate from L-histidine: step 1/3. The polypeptide is Histidine ammonia-lyase (Staphylococcus aureus (strain MRSA252)).